A 344-amino-acid polypeptide reads, in one-letter code: 5-formaminoimidazole-4-carboxamide-1-(beta)-D-ribofuranosyl 5'-monophosphate synthetase (344 aa).

5-amino-1-(5-phospho-beta-D-ribosyl)imidazole-4-carboxamide-binding residues include His-31 and Ser-96. Positions 130–324 (MELLQRAGVP…YFDRPMDMGE (195 aa)) constitute an ATP-grasp domain. Residues 153-198 (PVIV…VPAY) and Glu-220 contribute to the ATP site. Residue Asn-240 coordinates 5-amino-1-(5-phospho-beta-D-ribosyl)imidazole-4-carboxamide. The Mg(2+) site is built by Glu-279 and Glu-292.

The protein belongs to the phosphohexose mutase family. Mg(2+) is required as a cofactor. Mn(2+) serves as cofactor.

The enzyme catalyses 5-amino-1-(5-phospho-beta-D-ribosyl)imidazole-4-carboxamide + formate + ATP = 5-formamido-1-(5-phospho-D-ribosyl)imidazole-4-carboxamide + ADP + phosphate. Its pathway is purine metabolism; IMP biosynthesis via de novo pathway; 5-formamido-1-(5-phospho-D-ribosyl)imidazole-4-carboxamide from 5-amino-1-(5-phospho-D-ribosyl)imidazole-4-carboxamide (formate route): step 1/1. Functionally, catalyzes the ATP- and formate-dependent formylation of 5-aminoimidazole-4-carboxamide-1-beta-d-ribofuranosyl 5'-monophosphate (AICAR) to 5-formaminoimidazole-4-carboxamide-1-beta-d-ribofuranosyl 5'-monophosphate (FAICAR) in the absence of folates. The sequence is that of 5-formaminoimidazole-4-carboxamide-1-(beta)-D-ribofuranosyl 5'-monophosphate synthetase from Pyrobaculum neutrophilum (strain DSM 2338 / JCM 9278 / NBRC 100436 / V24Sta) (Thermoproteus neutrophilus).